Here is a 301-residue protein sequence, read N- to C-terminus: Heat shock factor protein HSF24 (301 aa).

The DNA-binding element occupies 7–101; it reads PAPFLLKTYQ…LLTAIRRRKT (95 aa). Disordered stretches follow at residues 103–160 and 221–244; these read TSTP…DENE and GVKD…DEKG. Residues 107 to 142 are compositionally biased toward low complexity; sequence AGGKSVAAGASASPDNSGDDIGSSSTSSPDSKNPGS. The segment covering 233 to 243 has biased composition (acidic residues); that stretch reads DNDDKEDDDEK.

Belongs to the HSF family. Homotrimer. In terms of processing, exhibits temperature-dependent phosphorylation.

Its subcellular location is the nucleus. DNA-binding protein that specifically binds heat shock promoter elements (HSE) and activates transcription. The polypeptide is Heat shock factor protein HSF24 (HSF24) (Solanum peruvianum (Peruvian tomato)).